The sequence spans 648 residues: Interferon-induced GTP-binding protein Mx1 (648 aa).

N-acetylmethionine is present on Met-1. The disordered stretch occupies residues 1–26 (MVHSDLGIEELDSPESSLNGSEDMES). The Dynamin-type G domain occupies 56–329 (DLALPAIAVI…LIMHICKTLP (274 aa)). The tract at residues 66–73 (GDQSSGKS) is G1 motif. 66-73 (GDQSSGKS) is a binding site for GTP. The segment at 91–93 (VTR) is G2 motif. Positions 167–170 (DLPG) are G3 motif. GTP-binding positions include 167 to 171 (DLPGI) and 236 to 239 (TKPD). The interval 236–239 (TKPD) is G4 motif. The G5 motif stretch occupies residues 268–271 (KCRG). The segment at 330–355 (LLENQIKETHQRITEELQKYGKDIPE) is bundle signaling element (BSE). Residues 355–522 (EEESEKMFCL…HFQMEQLVYC (168 aa)) form a middle domain region. A stalk region spans residues 356-618 (EESEKMFCLI…KDQYDWLLKE (263 aa)). Residues 543–546 (KNKK) form a critical for lipid-binding region. The region spanning 560-648 (TDEIFQHLTA…ARQRLAKFPG (89 aa)) is the GED domain.

The protein belongs to the TRAFAC class dynamin-like GTPase superfamily. Dynamin/Fzo/YdjA family. In terms of assembly, homooligomer. Oligomerizes into multimeric filamentous or ring-like structures by virtue of its stalk domain. Oligomerization is critical for GTPase activity, protein stability, and recognition of viral target structures. Interacts with TRPC1, TRPC3, TRPC4, TRPC5, TRPC6 and TRPC7. Interacts with HSPA5. Interacts with TUBB/TUBB5. Interacts with DDX39A and DDX39B. In terms of processing, ISGylated. In terms of tissue distribution, ubiquitously expressed.

The protein localises to the cytoplasm. It localises to the endoplasmic reticulum membrane. Its subcellular location is the perinuclear region. It is found in the nucleus. Its function is as follows. Interferon-induced dynamin-like GTPase with antiviral activity against rabies virus (RABV), vesicular stomatitis virus (VSV) and murine pneumonia virus (MPV). Isoform 1 but not isoform 2 shows antiviral activity against vesicular stomatitis virus (VSV). The polypeptide is Interferon-induced GTP-binding protein Mx1 (MX1) (Bos taurus (Bovine)).